A 147-amino-acid polypeptide reads, in one-letter code: Hemoglobin subunit gamma (147 aa).

The region spanning His-3 to His-147 is the Globin domain. Heme b is bound by residues His-64 and His-93.

This sequence belongs to the globin family. As to quaternary structure, heterotetramer of two alpha chains and two gamma chains in fetal hemoglobin (Hb F). As to expression, red blood cells.

In terms of biological role, gamma chains make up the fetal hemoglobin F, in combination with alpha chains. The polypeptide is Hemoglobin subunit gamma (HBG) (Cheirogaleus medius (Fat-tailed dwarf lemur)).